A 544-amino-acid polypeptide reads, in one-letter code: Elongator complex protein 3 (544 aa).

In terms of domain architecture, Radical SAM core spans 79–369 (RTASGIAVVA…YRIQRDIPMP (291 aa)). [4Fe-4S] cluster contacts are provided by Cys96, Cys106, and Cys109. Residues Lys161, 472-475 (ELHV), 495-497 (FGT), and Tyr528 contribute to the acetyl-CoA site. The N-acetyltransferase domain occupies 393–544 (TKCRDIRARE…LDGPYMSKWL (152 aa)).

The protein belongs to the ELP3 family. In terms of assembly, component of the elongator complex. The cofactor is [4Fe-4S] cluster.

It localises to the cytoplasm. It catalyses the reaction uridine(34) in tRNA + acetyl-CoA + S-adenosyl-L-methionine + H2O = 5-(carboxymethyl)uridine(34) in tRNA + 5'-deoxyadenosine + L-methionine + CoA + 2 H(+). It functions in the pathway tRNA modification; 5-methoxycarbonylmethyl-2-thiouridine-tRNA biosynthesis. In terms of biological role, catalytic tRNA acetyltransferase subunit of the elongator complex which is required for multiple tRNA modifications, including mcm5U (5-methoxycarbonylmethyl uridine), mcm5s2U (5-methoxycarbonylmethyl-2-thiouridine), and ncm5U (5-carbamoylmethyl uridine). In the elongator complex, acts as a tRNA uridine(34) acetyltransferase, which mediates formation of carboxymethyluridine in the wobble base at position 34 in tRNAs. This chain is Elongator complex protein 3, found in Schizosaccharomyces pombe (strain 972 / ATCC 24843) (Fission yeast).